An 88-amino-acid chain; its full sequence is Small ribosomal subunit protein bS20 (88 aa).

Residues 1–23 show a composition bias toward basic and acidic residues; it reads MPNTKSAEKALRVADANRQENRR. Disordered regions lie at residues 1 to 28 and 69 to 88; these read MPNT…KSQV and PKNA…QAAK. A compositionally biased stretch (basic residues) spans 71 to 81; the sequence is NAARRKSRLMK.

The protein belongs to the bacterial ribosomal protein bS20 family.

Its function is as follows. Binds directly to 16S ribosomal RNA. In Dehalococcoides mccartyi (strain ATCC BAA-2266 / KCTC 15142 / 195) (Dehalococcoides ethenogenes (strain 195)), this protein is Small ribosomal subunit protein bS20.